A 469-amino-acid polypeptide reads, in one-letter code: Collagenase 3 (469 aa).

An N-terminal signal peptide occupies residues 1–17 (SSLSVLVLSLSFAYCLS). Residues 18–100 (APVPQDEDSE…QPRCGVPDVG (83 aa)) constitute a propeptide, activation peptide. Positions 92-99 (PRCGVPDV) match the Cysteine switch motif. C94 is a Zn(2+) binding site. N115 carries an N-linked (GlcNAc...) asparagine glycan. D126 contacts Ca(2+). An N-linked (GlcNAc...) asparagine glycan is attached at N150. D160 serves as a coordination point for Ca(2+). Zn(2+)-binding residues include H170 and D172. Positions 177, 178, and 182 each coordinate Ca(2+). Residue H185 coordinates Zn(2+). Ca(2+) is bound by residues G194 and D196. A Zn(2+)-binding site is contributed by H198. Residues D200, D201, and E203 each coordinate Ca(2+). H220 is a Zn(2+) binding site. The active site involves E221. Residues H224, H230, and M238 each contribute to the Zn(2+) site. The segment at 266–469 (PGNRDPHPKH…ILKTNFVLMC (204 aa)) is interaction with collagen. 4 Hemopexin repeats span residues 279–328 (PEKC…WPEL), 329–375 (PNKL…GFPK), 377–425 (LKAI…FPGI), and 426–469 (GEKV…VLMC). Residues C282 and C469 are joined by a disulfide bond. Ca(2+) contacts are provided by D289, I291, D333, A335, A383, and D430.

It belongs to the peptidase M10A family. Ca(2+) is required as a cofactor. Requires Zn(2+) as cofactor. Post-translationally, the proenzyme is activated by removal of the propeptide; this cleavage can be effected by other matrix metalloproteinases and may involve several cleavage steps. Cleavage can also be autocatalytic, after partial maturation by another protease or after treatment with 4-aminophenylmercuric acetate (APMA) (in vitro).

It localises to the secreted. Its subcellular location is the extracellular space. The protein localises to the extracellular matrix. In terms of biological role, plays a role in the degradation of extracellular matrix proteins including fibrillar collagen, fibronectin, TNC and ACAN. Cleaves several types of triple helical collagen. May also function by activating or degrading key regulatory proteins. Plays a role in wound healing, tissue remodeling, cartilage degradation, bone development, bone mineralization and ossification. This chain is Collagenase 3 (mmp13), found in Xenopus laevis (African clawed frog).